The following is a 311-amino-acid chain: Malate dehydrogenase (311 aa).

NAD(+)-binding positions include 7–12 and aspartate 32; that span reads GAGNVG. Residues arginine 82 and arginine 88 each coordinate substrate. NAD(+)-binding positions include asparagine 95 and 118-120; that span reads VSN. Residues asparagine 120 and arginine 151 each contribute to the substrate site. Histidine 175 (proton acceptor) is an active-site residue.

It belongs to the LDH/MDH superfamily. MDH type 3 family.

The catalysed reaction is (S)-malate + NAD(+) = oxaloacetate + NADH + H(+). Its function is as follows. Catalyzes the reversible oxidation of malate to oxaloacetate. The chain is Malate dehydrogenase from Flavobacterium johnsoniae (strain ATCC 17061 / DSM 2064 / JCM 8514 / BCRC 14874 / CCUG 350202 / NBRC 14942 / NCIMB 11054 / UW101) (Cytophaga johnsonae).